The primary structure comprises 96 residues: Co-chaperonin GroES (96 aa).

Belongs to the GroES chaperonin family. In terms of assembly, heptamer of 7 subunits arranged in a ring. Interacts with the chaperonin GroEL.

It localises to the cytoplasm. Functionally, together with the chaperonin GroEL, plays an essential role in assisting protein folding. The GroEL-GroES system forms a nano-cage that allows encapsulation of the non-native substrate proteins and provides a physical environment optimized to promote and accelerate protein folding. GroES binds to the apical surface of the GroEL ring, thereby capping the opening of the GroEL channel. The protein is Co-chaperonin GroES of Actinobacillus pleuropneumoniae serotype 3 (strain JL03).